The sequence spans 457 residues: Multidrug resistance protein MdtK (457 aa).

12 consecutive transmembrane segments (helical) span residues 11 to 31 (LLAL…MGFV), 53 to 73 (IWLP…PVIA), 93 to 113 (WLAG…GYII), 127 to 147 (AVGY…FQVA), 160 to 180 (GMVM…IFIY), 188 to 208 (LGGI…FIAM), 243 to 263 (LPIA…ALLV), 276 to 296 (IALN…AAVT), 314 to 334 (AART…IFTV), 350 to 370 (VVAL…SDSI), 387 to 407 (IFFI…YILA), and 418 to 438 (PAGF…LMML).

Belongs to the multi antimicrobial extrusion (MATE) (TC 2.A.66.1) family. MdtK subfamily.

Its subcellular location is the cell inner membrane. In terms of biological role, multidrug efflux pump that functions probably as a Na(+)/drug antiporter. This is Multidrug resistance protein MdtK from Salmonella agona (strain SL483).